Reading from the N-terminus, the 129-residue chain is Large ribosomal subunit protein bL12 (129 aa).

Belongs to the bacterial ribosomal protein bL12 family. As to quaternary structure, homodimer. Part of the ribosomal stalk of the 50S ribosomal subunit. Forms a multimeric L10(L12)X complex, where L10 forms an elongated spine to which 2 to 4 L12 dimers bind in a sequential fashion. Binds GTP-bound translation factors.

In terms of biological role, forms part of the ribosomal stalk which helps the ribosome interact with GTP-bound translation factors. Is thus essential for accurate translation. The polypeptide is Large ribosomal subunit protein bL12 (Fervidobacterium nodosum (strain ATCC 35602 / DSM 5306 / Rt17-B1)).